Consider the following 197-residue polypeptide: Probable GTP-binding protein EngB (197 aa).

Residues 25–197 enclose the EngB-type G domain; the sequence is SAPEIAFAGR…VRDEFFKFTR (173 aa). Residues 33 to 40, 60 to 64, 79 to 82, 146 to 149, and 177 to 179 contribute to the GTP site; these read GRSNVGKS, GCTRQ, DLPG, TKID, and ISI. Residues serine 40 and threonine 62 each contribute to the Mg(2+) site.

Belongs to the TRAFAC class TrmE-Era-EngA-EngB-Septin-like GTPase superfamily. EngB GTPase family. Mg(2+) serves as cofactor.

In terms of biological role, necessary for normal cell division and for the maintenance of normal septation. This is Probable GTP-binding protein EngB from Wolbachia pipientis subsp. Culex pipiens (strain wPip).